We begin with the raw amino-acid sequence, 98 residues long: Large ribosomal subunit protein uL23 (98 aa).

It belongs to the universal ribosomal protein uL23 family. As to quaternary structure, part of the 50S ribosomal subunit. Contacts protein L29, and trigger factor when it is bound to the ribosome.

One of the early assembly proteins it binds 23S rRNA. One of the proteins that surrounds the polypeptide exit tunnel on the outside of the ribosome. Forms the main docking site for trigger factor binding to the ribosome. The sequence is that of Large ribosomal subunit protein uL23 from Roseobacter denitrificans (strain ATCC 33942 / OCh 114) (Erythrobacter sp. (strain OCh 114)).